Reading from the N-terminus, the 1773-residue chain is Zinc finger CCCH domain-containing protein 19 (1773 aa).

Residues 145–166 (SGDRLEENKEVSMEEEPSSHEL) form a disordered region. Basic and acidic residues predominate over residues 147-156 (DRLEENKEVS). A coiled-coil region spans residues 196 to 218 (GEEIESDLESKKEKVDVIEEETT). Disordered stretches follow at residues 270-290 (IGEG…DVTE), 361-409 (DVDK…AGQT), and 434-591 (ISEM…KTVK). 2 stretches are compositionally biased toward basic and acidic residues: residues 273–286 (GAKD…KEGV) and 361–378 (DVDK…HVPE). The stretch at 403–437 (AEEAGQTVDLEEIREENQELSKELAQVDETKISEM) forms a coiled coil. Composition is skewed to basic and acidic residues over residues 444-455 (MIKDEDQEKDDN) and 497-513 (KVDR…TDTR). Composition is skewed to acidic residues over residues 514 to 529 (IEDE…TDVA) and 551 to 572 (EEMT…EVEE). Residues 578–588 (GGKRKRGRNTK) are compositionally biased toward basic residues. Residues 581-588 (RKRGRNTK) carry the Nuclear localization signal 1 motif. The PHD-type zinc finger occupies 599-665 (EDVCFMCFDG…TYLCYTCMFS (67 aa)). Residues 741 to 751 (AKRPLKGHETN) are compositionally biased toward basic and acidic residues. A disordered region spans residues 741–797 (AKRPLKGHETNASKQGTASETDYVTDGGSDSDSSPKKRKTRSRSKSGSAEKILSSGD). Residues 752–762 (ASKQGTASETD) show a composition bias toward polar residues. Positions 801–884 (SDETMEWASK…LNLLDSHFLK (84 aa)) constitute an SWIB/MDM2 domain. Over residues 903-919 (PNHVDVDENLDHPVKSG) the composition is skewed to basic and acidic residues. The interval 903-935 (PNHVDVDENLDHPVKSGKDKKRKTRKKNVRKGR) is disordered. Residues 920–935 (KDKKRKTRKKNVRKGR) are compositionally biased toward basic residues. The Nuclear localization signal 2 signature appears at 921–928 (DKKRKTRK). A Plus3 domain is found at 944–1076 (AVDMHNINLI…KAIALQEVRV (133 aa)). Residues 1139–1152 (EEIPEIHADPKMDP) show a composition bias toward basic and acidic residues. Residues 1139–1274 (EEIPEIHADP…PETPARSSRA (136 aa)) are disordered. Acidic residues predominate over residues 1153–1163 (DCESEDEDEKE). Residues 1193-1212 (FSSNESWTGTSNYSNTSANR) show a composition bias toward polar residues. A Phosphoserine modification is found at Ser1281. Residues 1307 to 1361 (EKIWHYKDPSGKVQGPFSMAQLRKWNNTGYFPAKLEIWKANESPLDSVLLTDALA) enclose the GYF domain. Composition is skewed to polar residues over residues 1409–1433 (RNSQ…TTPT), 1441–1469 (SRWS…QSQT), 1499–1509 (VSVNHSATLHS), and 1518–1528 (SWGSMQTDHGG). 3 disordered regions span residues 1409–1469 (RNSQ…QSQT), 1485–1605 (QPQT…SWGQ), and 1649–1746 (GQTQ…QQNN). Positions 1529–1555 (SNTPSSQNNSTSYGTPSPSVLPSQSQP) are enriched in low complexity. The segment covering 1569–1579 (SQPNAQAQAQW) has biased composition (polar residues). Composition is skewed to low complexity over residues 1585–1602 (NNNQ…QNSS) and 1666–1677 (QSQSQSQVQAQA). The segment covering 1678 to 1708 (GTTGSGWMQPGQGIQSGNSNQNWGTQNQTAI) has biased composition (polar residues). The span at 1722 to 1735 (GNQQQSQNGDSGYG) shows a compositional bias: low complexity. Residues 1737 to 1746 (NRQSGGQQNN) are compositionally biased toward polar residues. A C3H1-type zinc finger spans residues 1747-1773 (FKGQRVCKFFRENGHCRKGASCNYLHN).

In terms of assembly, interacts with unmethylated histone H3 and AGO2. The interaction with AGO2 in required to direct DNA methylation and silencing. Expressed in seedlings, mostly in the vasculature and shoot apices of young seedlings.

It localises to the nucleus. Its function is as follows. Plays a central role in integrating RNA silencing and chromatin signals in 21 nt siRNA-dependent DNA methylation on cytosine pathway leading to transcriptional gene silencing of specific sequences. Involved in a chromatin-based RNA silencing pathway that encompasses both post-transcriptional gene silencing (PTGS) (e.g. RDR1, RDR6 and AGO2) and transcriptional gene silencing (TGS) (e.g. siRNA-dependent DNA methylation and histone H3) components. Mediates siRNA accumulation at specific chromatin loci. Binds H3K4me0 through its PHD to enforce low levels of H3K4 methylation and gene silencing at a subset of genomic loci. The protein is Zinc finger CCCH domain-containing protein 19 (NERD) of Arabidopsis thaliana (Mouse-ear cress).